The primary structure comprises 279 residues: Large ribosomal subunit protein uL2 (279 aa).

The tract at residues 223 to 279 is disordered; it reads VAMNPVDHPMGGGEGRSSGGHPRSRKGLYAKGGKTRSANKYSKNMIVKKRVNKRLSK. The segment covering 268 to 279 has biased composition (basic residues); that stretch reads IVKKRVNKRLSK.

It belongs to the universal ribosomal protein uL2 family. In terms of assembly, part of the 50S ribosomal subunit. Forms a bridge to the 30S subunit in the 70S ribosome.

In terms of biological role, one of the primary rRNA binding proteins. Required for association of the 30S and 50S subunits to form the 70S ribosome, for tRNA binding and peptide bond formation. It has been suggested to have peptidyltransferase activity; this is somewhat controversial. Makes several contacts with the 16S rRNA in the 70S ribosome. The polypeptide is Large ribosomal subunit protein uL2 (Cytophaga hutchinsonii (strain ATCC 33406 / DSM 1761 / CIP 103989 / NBRC 15051 / NCIMB 9469 / D465)).